The following is a 300-amino-acid chain: Ribonuclease HIII (300 aa).

Residues 83 to 300 (IPIIGSDEVG…THKAQALLTK (218 aa)) enclose the RNase H type-2 domain. A divalent metal cation is bound by residues aspartate 89, glutamate 90, and aspartate 194.

Belongs to the RNase HII family. RnhC subfamily. The cofactor is Mn(2+). It depends on Mg(2+) as a cofactor.

It localises to the cytoplasm. It catalyses the reaction Endonucleolytic cleavage to 5'-phosphomonoester.. Its function is as follows. Endonuclease that specifically degrades the RNA of RNA-DNA hybrids. This is Ribonuclease HIII from Streptococcus pyogenes serotype M1.